The primary structure comprises 1068 residues: WD repeat-containing protein on Y chromosome (1068 aa).

WD repeat units lie at residues 155 to 199, 201 to 242, 322 to 361, 365 to 404, 455 to 494, 507 to 546, and 594 to 634; these read DEVT…IRTA, SESI…RGPF, RIPL…EPSA, GHNG…LLQT, THAA…RKII, IIDI…VVRN, and FHTD…RRYS. Residues 657–687 are disordered; it reads SKRLASRPTPGNHGLQMGRAGRSTVLNRPED. 2 WD repeats span residues 746-785 and 829-868; these read KTGD…VPET and GHLK…LGTL. The tract at residues 1026 to 1068 is disordered; it reads SAINIKQPSRRRSDKTNDTRNVRTPRARDLIALEMSSSHASQS. A compositionally biased stretch (basic and acidic residues) spans 1039 to 1056; sequence DKTNDTRNVRTPRARDLI.

The chain is WD repeat-containing protein on Y chromosome from Drosophila yakuba (Fruit fly).